Consider the following 227-residue polypeptide: Charged multivesicular body protein 4b (227 aa).

Disordered stretches follow at residues 1–26 (MSGILGKLFGAGAGGKGAGKGPSPQE) and 186–227 (SGPE…AGNM). The span at 9 to 20 (FGAGAGGKGAGK) shows a compositional bias: gly residues. A coiled-coil region spans residues 25–185 (QEAIQRLRDT…EELDKNLLEI (161 aa)).

Belongs to the SNF7 family. Probable core component of the endosomal sorting required for transport complex III (ESCRT-III). ESCRT-III components are thought to multimerize to form a flat lattice on the perimeter membrane of the endosome.

The protein resides in the cytoplasm. Its subcellular location is the cytosol. It localises to the late endosome membrane. It is found in the midbody. Its function is as follows. Probable core component of the endosomal sorting required for transport complex III (ESCRT-III) which is involved in multivesicular bodies (MVBs) formation and sorting of endosomal cargo proteins into MVBs. MVBs contain intraluminal vesicles (ILVs) that are generated by invagination and scission from the limiting membrane of the endosome and mostly are delivered to lysosomes enabling degradation of membrane proteins, such as stimulated growth factor receptors, lysosomal enzymes and lipids. This Gallus gallus (Chicken) protein is Charged multivesicular body protein 4b (CHMP4B).